We begin with the raw amino-acid sequence, 211 residues long: Transcriptional regulator GfcR (211 aa).

This sequence belongs to the purine/pyrimidine phosphoribosyltransferase family. GfcR subfamily.

The protein is Transcriptional regulator GfcR of Methanocaldococcus jannaschii (strain ATCC 43067 / DSM 2661 / JAL-1 / JCM 10045 / NBRC 100440) (Methanococcus jannaschii).